The following is a 707-amino-acid chain: Casein kinase 1-like protein HD16 (707 aa).

Residues 19–67 (YDVQDADPAASPVSPAPRGRTGRRGGAAAGRGNKTVAEGGGRKALKPRG) form a disordered region. Residues 24 to 37 (ADPAASPVSPAPRG) are compositionally biased toward low complexity. Residues 147–425 (YITDRKLGKG…KLISLFDGLI (279 aa)) form the Protein kinase domain. ATP is bound by residues 153–161 (LGKGGFGQV) and lysine 184. The Proton acceptor role is filled by aspartate 276.

Belongs to the protein kinase superfamily. CK1 Ser/Thr protein kinase family. Casein kinase I subfamily. In terms of assembly, monomer. Interacts with GHD7 (via C-terminus). Interacts with SLR1. Post-translationally, autophosphorylated. Expressed in roots, leaves and stems. Expressed in leaf vascular bundles, and proximal regions of the shoot and roots.

It is found in the cytoplasm. It localises to the nucleus. The catalysed reaction is L-seryl-[protein] + ATP = O-phospho-L-seryl-[protein] + ADP + H(+). It carries out the reaction L-threonyl-[protein] + ATP = O-phospho-L-threonyl-[protein] + ADP + H(+). Functionally, casein kinases are operationally defined by their preferential utilization of acidic proteins such as caseins as substrates. It can phosphorylate a large number of proteins. Can phosphorylate casein on threonine residues in vitro. Involved in the regulation of flowering time through gibberellin (GA) signaling, and independently of photoperiod. Phosphorylates the DELLA protein SLR1, stabilizing SLR1 protein and sustaining SLR1 activity as repressor of GA signaling. Required for normal development of male floral organs and grains, through modulation of GA signaling. Targeted and repressed by the homeobox protein HAZ1 during GA signaling. Can phosphorylate phosvitin and SLR1 in vitro. Is not required for clock function in either the presence or the absence of light signals. Involved in a genetic control pathway for photoperiodic flowering under long day (LD) conditions that includes HD1, GHD7, HD5 and HD2. Phosphorylates and activates GHD7, a major floral repressor under LD conditions. Phosphorylation of GHD7 enhances its function in the repression of EHD1, HD3A and HD3B/RFT1, and obviously delaying flowering. This Oryza sativa subsp. japonica (Rice) protein is Casein kinase 1-like protein HD16.